The chain runs to 556 residues: Formate--tetrahydrofolate ligase (556 aa).

Residue 65 to 72 participates in ATP binding; sequence TPAGEGKS.

This sequence belongs to the formate--tetrahydrofolate ligase family.

The enzyme catalyses (6S)-5,6,7,8-tetrahydrofolate + formate + ATP = (6R)-10-formyltetrahydrofolate + ADP + phosphate. It functions in the pathway one-carbon metabolism; tetrahydrofolate interconversion. The chain is Formate--tetrahydrofolate ligase from Streptococcus agalactiae serotype Ia (strain ATCC 27591 / A909 / CDC SS700).